A 451-amino-acid chain; its full sequence is Velvet complex subunit 2 (451 aa).

3 disordered regions span residues 1–95 (MNTT…PRSI), 205–312 (PGQS…QTNP), and 426–451 (PIRK…DDDY). Polar residues-rich tracts occupy residues 18–28 (TMPSLHDTTYR), 40–62 (MPQT…NSLP), and 205–217 (PGQS…SPTY). In terms of domain architecture, Velvet spans 92–428 (PRSITVDGRK…ATQGIKIPIR (337 aa)). A compositionally biased stretch (low complexity) spans 267–283 (PQQSNYYYPQPSQSIPS). Positions 427-445 (IRKDGKDGPGKGGKDGSRG) are enriched in basic and acidic residues.

It belongs to the velvet family. VelB subfamily. In terms of assembly, component of the heterotrimeric velvet complex composed of LAE1, VEL1 and VEL2; VEL1 acting as a bridging protein between LAE1 and VEL2. Forms a heterodimeric complex with VOS1; the formation of the VEL2-VOS1 complex is light-dependent.

Its subcellular location is the nucleus. It localises to the cytoplasm. Functionally, component of the velvet transcription factor complex that controls sexual/asexual developmental ratio in response to light, promoting sexual development in the darkness while stimulating asexual sporulation under illumination. The velvet complex acts as a global regulator for secondary metabolite gene expression. Component of the VEL2-VOS1 heterodimeric complex that plays a dual role in activating genes associated with spore maturation and repressing certain development-associated genes. The VEL2-VOS1 complex binds DNA through the DNA-binding domain of VOS1 that recognizes an 11-nucleotide consensus sequence 5'-CTGGCCGCGGC-3' consisting of two motifs in the promoters of key developmental regulatory genes. Controls the expression of the oxalic acid and melanin gene clusters. Involved in the resistance to oxidative stress. Required for full virulence. This is Velvet complex subunit 2 from Botryotinia fuckeliana (strain B05.10) (Noble rot fungus).